A 282-amino-acid polypeptide reads, in one-letter code: BTB/POZ domain-containing protein At3g56230 (282 aa).

The segment covering 40–50 has biased composition (basic and acidic residues); it reads GSKEDRHDKSN. The interval 40-66 is disordered; the sequence is GSKEDRHDKSNHNSTINNGSSISSSPL. The segment covering 51–64 has biased composition (low complexity); it reads HNSTINNGSSISSS. The BTB domain occupies 111–181; that stretch reads ADILLKPGDD…LYTGTLASDK (71 aa).

The protein operates within protein modification; protein ubiquitination. Functionally, may act as a substrate-specific adapter of an E3 ubiquitin-protein ligase complex (CUL3-RBX1-BTB) which mediates the ubiquitination and subsequent proteasomal degradation of target proteins. The polypeptide is BTB/POZ domain-containing protein At3g56230 (Arabidopsis thaliana (Mouse-ear cress)).